Consider the following 288-residue polypeptide: Quinate/shikimate dehydrogenase (288 aa).

K71 and D107 together coordinate substrate. Residues 132-135, 155-158, K205, 232-235, and G255 contribute to the NAD(+) site; these read AGGA, NRRD, and CVYN.

Belongs to the shikimate dehydrogenase family. Homodimer.

It carries out the reaction L-quinate + NAD(+) = 3-dehydroquinate + NADH + H(+). It catalyses the reaction L-quinate + NADP(+) = 3-dehydroquinate + NADPH + H(+). The enzyme catalyses shikimate + NADP(+) = 3-dehydroshikimate + NADPH + H(+). The catalysed reaction is shikimate + NAD(+) = 3-dehydroshikimate + NADH + H(+). It functions in the pathway metabolic intermediate biosynthesis; chorismate biosynthesis; chorismate from D-erythrose 4-phosphate and phosphoenolpyruvate: step 4/7. In terms of biological role, the actual biological function of YdiB remains unclear, nor is it known whether 3-dehydroshikimate or quinate represents the natural substrate. Catalyzes the reversible NAD-dependent reduction of both 3-dehydroshikimate (DHSA) and 3-dehydroquinate to yield shikimate (SA) and quinate, respectively. It can use both NAD or NADP for catalysis, however it has higher catalytic efficiency with NAD. The polypeptide is Quinate/shikimate dehydrogenase (Escherichia coli O7:K1 (strain IAI39 / ExPEC)).